A 997-amino-acid polypeptide reads, in one-letter code: MSNRGGGGHGGASRGRGGGRRSDQRQDQSSGQVAWPGLQQSYGGRGGSVSAGRGRGNVGRGENTGDLTATQVPVASAVSGGRGRGNIGDPTFSVASSSKTVSVASSSKEESKNTEVSETMSNLQITSTETKPEMTSLPPASSKAVTFPVRPGRGTLGKKVMVRANHFLVQVADRDLYHYDVSINPEVISKTVNRNVMKLLVKNYKDSHLGGKSPAYDGRKSLYTAGPLPFDSKEFVVNLAEKRADGSSGKDRPFKVAVKNVTSTDLYQLQQFLDRKQREAPYDTIQVLDVVLRDKPSNDYVSVGRSFFHTSLGKDARDGRGELGDGIEYWRGYFQSLRLTQMGLSLNIDVSARSFYEPIVVTDFISKFLNIRDLNRPLRDSDRLKVKKVLRTLKVKLLHWNGTKSAKISGISSLPIRELRFTLEDKSEKTVVQYFAEKYNYRVKYQALPAIQTGSDTRPVYLPMELCQIDEGQRYTKRLNEKQVTALLKATCQRPPDRENSIKNLVVKNNYNDDLSKEFGMSVTTQLASIEARVLPPPMLKYHDSGKEKMVNPRLGQWNMIDKKMVNGAKVTSWTCVSFSTRIDRGLPQEFCKQLIGMCVSKGMEFKPQPAIPFISCPPEHIEEALLDIHKRAPGLQLLIVILPDVTGSYGKIKRICETELGIVSQCCQPRQVNKLNKQYMENVALKINVKTGGRNTVLNDAIRRNIPLITDRPTIIMGADVTHPQPGEDSSPSIAAVVASMDWPEINKYRGLVSAQAHREEIIQDLYKLVQDPQRGLVHSGLIREHFIAFRRATGQIPQRIIFYRDGVSEGQFSQVLLHEMTAIRKACNSLQENYVPRVTFVIVQKRHHTRLFPEQHGNRDMTDKSGNIQPGTVVDTKICHPNEFDFYLNSHAGIQGTSRPAHYHVLLDENGFTADQLQMLTNNLCYTYARCTKSVSIVPPAYYAHLAAFRARYYMESEMSDGGSSRSRSSTTGVGQVISQLPAIKDNVKEVMFYC.

Gly residues-rich tracts occupy residues 1-16 and 43-59; these read MSNR…SRGR and GGRG…GNVG. Residues 1–144 are disordered; the sequence is MSNRGGGGHG…TSLPPASSKA (144 aa). The span at 93–106 shows a compositional bias: low complexity; it reads SVASSSKTVSVASS. The span at 116–129 shows a compositional bias: polar residues; it reads VSETMSNLQITSTE. The PAZ domain occupies 360–471; that stretch reads VVTDFISKFL…LPMELCQIDE (112 aa). The Piwi domain maps to 638-958; sequence LLIVILPDVT…AAFRARYYME (321 aa). 2 residues coordinate a divalent metal cation: aspartate 721 and aspartate 807. 3 interaction with guide RNA regions span residues 847-848, 893-901, and 930-952; these read KR, HAGIQGTSR, and YARC…AAFR. Histidine 947 is an a divalent metal cation binding site.

It belongs to the argonaute family. Ago subfamily. Requires Mg(2+) as cofactor. Mn(2+) is required as a cofactor.

In terms of biological role, involved in RNA-mediated post-transcriptional gene silencing (PTGS). Main component of the RNA-induced silencing complex (RISC) that binds to a short guide RNA such as a microRNA (miRNA) or small interfering RNA (siRNA). RISC uses the mature miRNA or siRNA as a guide for slicer-directed cleavage of homologous mRNAs to repress gene expression. Associates with siRNAs of various sizes, from 21-24 nucleotide in length and preferentially recruits small RNAs with a 5' terminal cytosine. Probably involved in antiviral RNA silencing. Associates with siRNAs derived from cucumber mosaic virus (CMV). Targeted by the turnip yellows virus (TuYV) protein P0 (via F-box-like domain) for probable proteasome degradation and thereby inactivating AGO5 function in RNA silencing. The protein is Protein argonaute 5 (AGO5) of Arabidopsis thaliana (Mouse-ear cress).